The chain runs to 185 residues: Ribosome-recycling factor (185 aa).

The disordered stretch occupies residues R143 to S163.

It belongs to the RRF family.

It is found in the cytoplasm. Its function is as follows. Responsible for the release of ribosomes from messenger RNA at the termination of protein biosynthesis. May increase the efficiency of translation by recycling ribosomes from one round of translation to another. The chain is Ribosome-recycling factor from Mycobacterium ulcerans (strain Agy99).